Reading from the N-terminus, the 622-residue chain is Low affinity potassium transport system protein Kup (622 aa).

12 helical membrane passes run 9-29, 49-69, 103-123, 137-157, 165-185, 213-233, 247-267, 276-296, 337-357, 363-383, 396-416, and 419-439; these read LPAITLAAIGVVYGDIGTSPL, VFGFLSLIFWLLIFVVSIKYL, VIMGLIGGSFFYGEVVITPAI, PQLDTWIVPLSIIVLTLLFMI, VGKLFAPIMLTWFLILAVLGL, VSFIALGAVVLSITGVEALYA, WFTVVLPSLVLNYFGQGALLL, PFFLLAPDWALIPLLILAALA, IYIPFVNWLLYFAVVVVIVSF, LAAAYGIAVTGTMVLTSILST, FVALILIAFLCVDIPLFSANL, and LLSGGWLPLSLGLIMFTIMTT.

It belongs to the HAK/KUP transporter (TC 2.A.72) family.

The protein localises to the cell inner membrane. It carries out the reaction K(+)(in) + H(+)(in) = K(+)(out) + H(+)(out). Its function is as follows. Responsible for the low-affinity transport of potassium into the cell. Likely operates as a K(+):H(+) symporter. This is Low affinity potassium transport system protein Kup from Salmonella paratyphi B (strain ATCC BAA-1250 / SPB7).